The chain runs to 92 residues: Acylphosphatase (92 aa).

The Acylphosphatase-like domain maps to 6 to 92 (RMYVIVYGIV…TGEFASFDTY (87 aa)). Active-site residues include arginine 21 and asparagine 39.

This sequence belongs to the acylphosphatase family.

It catalyses the reaction an acyl phosphate + H2O = a carboxylate + phosphate + H(+). The polypeptide is Acylphosphatase (acyP) (Sulfolobus acidocaldarius (strain ATCC 33909 / DSM 639 / JCM 8929 / NBRC 15157 / NCIMB 11770)).